We begin with the raw amino-acid sequence, 376 residues long: Chaperone protein DnaJ (376 aa).

One can recognise a J domain in the interval 5–70 (DYYEVLGVGR…DKKAAYDQFG (66 aa)). Residues 132–210 (GLTKELRIPT…CHGEGRVEKS (79 aa)) form a CR-type zinc finger. Zn(2+)-binding residues include Cys145, Cys148, Cys162, Cys165, Cys184, Cys187, Cys198, and Cys201. CXXCXGXG motif repeat units lie at residues 145-152 (CDSCDGSG), 162-169 (CGTCHGQG), 184-191 (CPTCHGRG), and 198-205 (CNKCHGEG).

Belongs to the DnaJ family. Homodimer. Zn(2+) is required as a cofactor.

The protein resides in the cytoplasm. In terms of biological role, participates actively in the response to hyperosmotic and heat shock by preventing the aggregation of stress-denatured proteins and by disaggregating proteins, also in an autonomous, DnaK-independent fashion. Unfolded proteins bind initially to DnaJ; upon interaction with the DnaJ-bound protein, DnaK hydrolyzes its bound ATP, resulting in the formation of a stable complex. GrpE releases ADP from DnaK; ATP binding to DnaK triggers the release of the substrate protein, thus completing the reaction cycle. Several rounds of ATP-dependent interactions between DnaJ, DnaK and GrpE are required for fully efficient folding. Also involved, together with DnaK and GrpE, in the DNA replication of plasmids through activation of initiation proteins. The protein is Chaperone protein DnaJ of Shewanella pealeana (strain ATCC 700345 / ANG-SQ1).